Consider the following 252-residue polypeptide: 3-dehydroquinate dehydratase (252 aa).

Residues Ser21, 46–48 (EWR), and Arg82 each bind 3-dehydroquinate. The active-site Proton donor/acceptor is the His143. Lys170 functions as the Schiff-base intermediate with substrate in the catalytic mechanism. The 3-dehydroquinate site is built by Arg213, Ser232, and Gln236.

It belongs to the type-I 3-dehydroquinase family. As to quaternary structure, homodimer.

The enzyme catalyses 3-dehydroquinate = 3-dehydroshikimate + H2O. It functions in the pathway metabolic intermediate biosynthesis; chorismate biosynthesis; chorismate from D-erythrose 4-phosphate and phosphoenolpyruvate: step 3/7. In terms of biological role, involved in the third step of the chorismate pathway, which leads to the biosynthesis of aromatic amino acids. Catalyzes the cis-dehydration of 3-dehydroquinate (DHQ) and introduces the first double bond of the aromatic ring to yield 3-dehydroshikimate. The sequence is that of 3-dehydroquinate dehydratase from Shigella dysenteriae.